A 519-amino-acid chain; its full sequence is Protein twist (519 aa).

Disordered regions lie at residues 53-77, 131-156, 301-321, and 368-389; these read MQQQ…QQQY, NFEQ…VATA, YEAY…SDRD, and FRKP…DEFS. Composition is skewed to low complexity over residues 54–76 and 134–146; these read QQQQ…QQQQ. Polar residues predominate over residues 308–317; the sequence is NSLNGSTYSS. The segment covering 368–379 has biased composition (basic residues); it reads FRKPRRRLKRKP. The bHLH domain occupies 390–441; sequence NQRVMANVRERQRTQSLNDAFKALQQIIPTLPSDKLSKIQTLKLATRYIDFL.

As to quaternary structure, efficient DNA binding requires dimerization with another bHLH protein. Homodimer.

The protein localises to the nucleus. Its function is as follows. Involved in the establishment and dorsoventral patterning of germ layers in the embryo. This is Protein twist from Drosophila virilis (Fruit fly).